The following is an 806-amino-acid chain: Minor extracellular protease Vpr (806 aa).

The N-terminal stretch at 1–28 (MKKGIIRFLLVSFVLFFALSTGITGVQA) is a signal peptide. The propeptide occupies 29–160 (APASSKTSAD…TISEDAVSPQ (132 aa)). Positions 57–142 (TVIVELKEKS…AVYPNVTYKT (86 aa)) constitute an Inhibitor I9 domain. The Peptidase S8 domain maps to 158–597 (SPQMDDSAPY…ARIMNAIKAD (440 aa)). Residues D189 and H233 each act as charge relay system in the active site. The PA domain occupies 383–461 (ELVEAGIGEA…KLSLEDGEKL (79 aa)). Residue S534 is the Charge relay system of the active site.

Belongs to the peptidase S8 family. Probably undergoes C-terminal processing or proteolysis. Auto-processed to form active enzymes of several different molecular weights.

The protein localises to the secreted. Its subcellular location is the cell wall. With respect to regulation, activity is inhibited by phenylmethylsulfonyl fluoride (PMSF), but not by EDTA. Serine protease. Involved in the production of the competence and sporulation stimulating factor CSF. Is directly involved in the processing of pro-CSF to CSF. Can also cleave pro-PhrA to PhrA, but cannot cleave pro-PhrE. Shows fibrinolytic activity in vitro. Not essential for growth or sporulation. In Bacillus subtilis (strain 168), this protein is Minor extracellular protease Vpr.